Consider the following 557-residue polypeptide: UvrABC system protein C (557 aa).

In terms of domain architecture, GIY-YIG spans 14 to 89 (EEPGVYIFKN…IKKYRPKYNV (76 aa)). Residues 194-229 (EEVFDYLKEKMETHSKMLDFENAAKYRDLLLNLSNV) form the UVR domain.

Belongs to the UvrC family. As to quaternary structure, interacts with UvrB in an incision complex.

It is found in the cytoplasm. In terms of biological role, the UvrABC repair system catalyzes the recognition and processing of DNA lesions. UvrC both incises the 5' and 3' sides of the lesion. The N-terminal half is responsible for the 3' incision and the C-terminal half is responsible for the 5' incision. The chain is UvrABC system protein C from Thermotoga maritima (strain ATCC 43589 / DSM 3109 / JCM 10099 / NBRC 100826 / MSB8).